The chain runs to 280 residues: Thiamine-phosphate synthase (280 aa).

Residues 1 to 64 are disordered; sequence MGWSGSPLTL…ATGRGGLRMT (64 aa). The segment covering 42–55 has biased composition (basic and acidic residues); sequence GRGELRSRERRGEA. Residues 104-108 and N141 contribute to the 4-amino-2-methyl-5-(diphosphooxymethyl)pyrimidine site; that span reads QLRCK. Mg(2+) contacts are provided by D142 and D161. S179 provides a ligand contact to 4-amino-2-methyl-5-(diphosphooxymethyl)pyrimidine. 205-207 provides a ligand contact to 2-[(2R,5Z)-2-carboxy-4-methylthiazol-5(2H)-ylidene]ethyl phosphate; the sequence is TPT. K208 lines the 4-amino-2-methyl-5-(diphosphooxymethyl)pyrimidine pocket. Residue G236 participates in 2-[(2R,5Z)-2-carboxy-4-methylthiazol-5(2H)-ylidene]ethyl phosphate binding.

It belongs to the thiamine-phosphate synthase family. Requires Mg(2+) as cofactor.

The catalysed reaction is 2-[(2R,5Z)-2-carboxy-4-methylthiazol-5(2H)-ylidene]ethyl phosphate + 4-amino-2-methyl-5-(diphosphooxymethyl)pyrimidine + 2 H(+) = thiamine phosphate + CO2 + diphosphate. It carries out the reaction 2-(2-carboxy-4-methylthiazol-5-yl)ethyl phosphate + 4-amino-2-methyl-5-(diphosphooxymethyl)pyrimidine + 2 H(+) = thiamine phosphate + CO2 + diphosphate. The enzyme catalyses 4-methyl-5-(2-phosphooxyethyl)-thiazole + 4-amino-2-methyl-5-(diphosphooxymethyl)pyrimidine + H(+) = thiamine phosphate + diphosphate. The protein operates within cofactor biosynthesis; thiamine diphosphate biosynthesis; thiamine phosphate from 4-amino-2-methyl-5-diphosphomethylpyrimidine and 4-methyl-5-(2-phosphoethyl)-thiazole: step 1/1. Condenses 4-methyl-5-(beta-hydroxyethyl)thiazole monophosphate (THZ-P) and 2-methyl-4-amino-5-hydroxymethyl pyrimidine pyrophosphate (HMP-PP) to form thiamine monophosphate (TMP). The chain is Thiamine-phosphate synthase from Deinococcus radiodurans (strain ATCC 13939 / DSM 20539 / JCM 16871 / CCUG 27074 / LMG 4051 / NBRC 15346 / NCIMB 9279 / VKM B-1422 / R1).